A 224-amino-acid polypeptide reads, in one-letter code: Cytidylate kinase (224 aa).

12 to 20 (GPAGAGKST) lines the ATP pocket.

This sequence belongs to the cytidylate kinase family. Type 1 subfamily.

It localises to the cytoplasm. It catalyses the reaction CMP + ATP = CDP + ADP. The enzyme catalyses dCMP + ATP = dCDP + ADP. The chain is Cytidylate kinase from Caldanaerobacter subterraneus subsp. tengcongensis (strain DSM 15242 / JCM 11007 / NBRC 100824 / MB4) (Thermoanaerobacter tengcongensis).